The sequence spans 230 residues: Large ribosomal subunit protein uL1 (230 aa).

The protein belongs to the universal ribosomal protein uL1 family. In terms of assembly, part of the 50S ribosomal subunit.

Functionally, binds directly to 23S rRNA. The L1 stalk is quite mobile in the ribosome, and is involved in E site tRNA release. Its function is as follows. Protein L1 is also a translational repressor protein, it controls the translation of the L11 operon by binding to its mRNA. This chain is Large ribosomal subunit protein uL1, found in Leptospira borgpetersenii serovar Hardjo-bovis (strain L550).